We begin with the raw amino-acid sequence, 240 residues long: Proline-rich antigen homolog (240 aa).

2 stretches are compositionally biased toward pro residues: residues 1–31 (MTEQ…PAAP) and 38–78 (APPP…PPGP). Residues 1 to 78 (MTEQPPPGGS…GGYAPPPPGP (78 aa)) are disordered. Residues 89–233 (TPWITRVLAA…KRQTLADKIM (145 aa)) enclose the RDD domain. The next 3 membrane-spanning stretches (helical) occupy residues 98-118 (AFID…IMLV), 142-162 (SMIG…YLVW), and 203-223 (LAHF…LWDA).

The protein belongs to the mycobacterial Pra family.

The protein localises to the cell membrane. In Mycobacterium tuberculosis (strain CDC 1551 / Oshkosh), this protein is Proline-rich antigen homolog.